The sequence spans 832 residues: Cadherin-17 (832 aa).

Residues 1 to 22 form the signal peptide; sequence MILQAHLHSLCLLMLYLATGYG. Residues 23–787 lie on the Extracellular side of the membrane; that stretch reads QEGKFSGPLK…HQTGIPTVGM (765 aa). 7 Cadherin domains span residues 30-128, 129-244, 245-340, 341-449, 450-566, 567-667, and 668-777; these read PLKP…TFLQ, SKYE…APKP, VEMV…PPTC, PSPV…IPIF, EKSD…APQF, SQHV…PPRL, and AKDY…RPAG. N-linked (GlcNAc...) asparagine glycosylation is found at asparagine 149, asparagine 184, asparagine 250, asparagine 419, asparagine 456, asparagine 546, asparagine 587, and asparagine 722. The helical transmembrane segment at 788-808 threads the bilayer; that stretch reads AVGILLTTLLVIGIILAVVFI. Residues 809–832 lie on the Cytoplasmic side of the membrane; that stretch reads RIKKDKGKDNVESAQASEVKPLRS.

In terms of tissue distribution, expressed in the gastrointestinal tract and pancreatic duct. Not detected in kidney, lung, liver, brain, adrenal gland and skin.

Its subcellular location is the cell membrane. Cadherins are calcium-dependent cell adhesion proteins. They preferentially interact with themselves in a homophilic manner in connecting cells; cadherins may thus contribute to the sorting of heterogeneous cell types. LI-cadherin may have a role in the morphological organization of liver and intestine. Involved in intestinal peptide transport. This is Cadherin-17 (CDH17) from Homo sapiens (Human).